The following is a 364-amino-acid chain: Fructose-1,6-bisphosphatase class 1 2 (364 aa).

Residues E101, D123, L125, and D126 each coordinate Mg(2+). Residues 126–129 (DGSS) and N218 contribute to the substrate site. Residue E290 participates in Mg(2+) binding.

This sequence belongs to the FBPase class 1 family. In terms of assembly, homotetramer. Requires Mg(2+) as cofactor.

It is found in the cytoplasm. The enzyme catalyses beta-D-fructose 1,6-bisphosphate + H2O = beta-D-fructose 6-phosphate + phosphate. It participates in carbohydrate biosynthesis; gluconeogenesis. The chain is Fructose-1,6-bisphosphatase class 1 2 from Cupriavidus taiwanensis (strain DSM 17343 / BCRC 17206 / CCUG 44338 / CIP 107171 / LMG 19424 / R1) (Ralstonia taiwanensis (strain LMG 19424)).